The sequence spans 319 residues: 1-aminocyclopropane-1-carboxylate oxidase (319 aa).

One can recognise a Fe2OG dioxygenase domain in the interval 152–253 (GPNFGSKVSN…RMSLASFYNP (102 aa)). Residues histidine 177, aspartate 179, and histidine 234 each contribute to the Fe cation site.

The protein belongs to the iron/ascorbate-dependent oxidoreductase family. The cofactor is Fe cation.

It carries out the reaction 1-aminocyclopropane-1-carboxylate + L-ascorbate + O2 = ethene + L-dehydroascorbate + hydrogen cyanide + CO2 + 2 H2O. Its pathway is alkene biosynthesis; ethylene biosynthesis via S-adenosyl-L-methionine; ethylene from S-adenosyl-L-methionine: step 2/2. This chain is 1-aminocyclopropane-1-carboxylate oxidase (ACO), found in Nicotiana tabacum (Common tobacco).